Reading from the N-terminus, the 620-residue chain is KIF-binding protein (620 aa).

2 coiled-coil regions span residues 30 to 64 (YKSKYEAIELLVKELKKEINENEKELNQQQQQDIL) and 133 to 169 (LIKSENLINQTIEKQQEQEQEQEQQFKDKLESLQLQN).

It belongs to the KIF-binding protein family.

Its subcellular location is the cytoplasm. The protein localises to the cytoskeleton. Functionally, activator of KIF1B plus-end-directed microtubule motor activity. Required for organization of axonal microtubules, and axonal outgrowth and maintenance during peripheral and central nervous system development. The sequence is that of KIF-binding protein (kifbp) from Dictyostelium discoideum (Social amoeba).